Here is a 153-residue protein sequence, read N- to C-terminus: L-alanine exporter AlaE (153 aa).

Transmembrane regions (helical) follow at residues 16–36 (VAMV…LSEM), 42–62 (LSSR…YGLY), 86–106 (LFAY…AIGA), and 114–134 (AVGS…YFLE).

It belongs to the AlaE exporter family.

It localises to the cell inner membrane. Exports L-alanine. This Musicola paradisiaca (strain Ech703) (Dickeya paradisiaca) protein is L-alanine exporter AlaE.